Here is a 141-residue protein sequence, read N- to C-terminus: Protein E6 (141 aa).

Zinc fingers lie at residues 27-64 (CRFC…CSSC) and 101-137 (CKFC…CRHC).

It belongs to the papillomaviridae E6 protein family. Forms homodimers. Interacts with ubiquitin-protein ligase UBE3A/E6-AP; this interaction stimulates UBE3A ubiquitin activity. Interacts with host BAK1.

It is found in the host cytoplasm. Its subcellular location is the host nucleus. Plays a major role in the induction and maintenance of cellular transformation. E6 associates with host UBE3A/E6-AP ubiquitin-protein ligase and modulates its activity. Protects host keratinocytes from apoptosis by mediating the degradation of host BAK1. May also inhibit host immune response. The protein is Protein E6 of Human papillomavirus 17.